The following is a 1682-amino-acid chain: Collagen alpha-4(IV) chain (1682 aa).

The N-terminal stretch at 1 to 32 is a signal peptide; that stretch reads MRCFFRWTKSFVTAPWSLIFILFTIQYEYGSG. The 7S domain stretch occupies residues 31-56; that stretch reads SGKKYGGPCGGRNCSVCQCFPEKGSR. An N-linked (GlcNAc...) asparagine glycan is attached at N43. 2 disordered regions span residues 56-255 and 379-1453; these read RGHP…VQPP and PGPP…FGPG. Residues 57–1451 form a triple-helical region region; it reads GHPGPLGPQG…TGDPGPKGFG (1395 aa). A Cell attachment site motif is present at residues 86 to 88; it reads RGD. A compositionally biased stretch (low complexity) spans 103-116; it reads PTGVPGFPGVDGVP. N134 is a glycosylation site (N-linked (GlcNAc...) asparagine). 2 consecutive short sequence motifs (cell attachment site) follow at residues 137–139 and 181–183; these read RGD. Residues 396 to 410 are compositionally biased toward pro residues; the sequence is MGPPGPPGVPGPPGF. Residues 411 to 426 are compositionally biased toward low complexity; the sequence is PGEAGVPGRLDCAPGK. Pro residues predominate over residues 487 to 500; it reads PPGPMGPPGPPGPP. Residues 578-601 are compositionally biased toward basic and acidic residues; it reads DGGDGRPGERGDPGPRGDHKDAAP. 2 consecutive short sequence motifs (cell attachment site) follow at residues 587–589 and 593–595; these read RGD. Pro residues predominate over residues 609–621; the sequence is LPGPPGRTGPEGP. Positions 632-647 are enriched in low complexity; the sequence is QRGLPGEPGRPGTRGF. N661 is a glycosylation site (N-linked (GlcNAc...) asparagine). The segment covering 665–682 has biased composition (low complexity); sequence PGKPGLPGLDGPPGLKGF. Residues 716 to 718 carry the Cell attachment site motif; it reads RGD. 2 stretches are compositionally biased toward low complexity: residues 742–758 and 857–902; these read PGKDGQKGIPGDPAFGD and PAGM…LPGL. Composition is skewed to basic and acidic residues over residues 911-929 and 938-950; these read ERGKPGPDGEPGRKGEVGE and DLGERGAKGDRGL. A compositionally biased stretch (gly residues) spans 969–978; that stretch reads GPPGDGGFSG. Short sequence motifs (cell attachment site) lie at residues 980-982 and 992-994; these read RGD. The segment covering 998–1010 has biased composition (low complexity); that stretch reads DGLPGLHRGQPGI. Pro residues predominate over residues 1011 to 1025; the sequence is DGPPGPPGPPGPPGS. Over residues 1034-1044 the composition is skewed to low complexity; it reads FPGFPGDQGDP. Positions 1144-1146 match the Cell attachment site motif; it reads RGD. Pro residues-rich tracts occupy residues 1223–1235, 1248–1272, 1289–1304, 1340–1351, and 1435–1444; these read PGPPGRPGPPGPA, DPGPPGDRGPPGPDGPRGVPGPPGS, PGPPGSRGPPGPPGCQ, PGPPGRKGPVGP, and APGPPGPTGD. In terms of domain architecture, Collagen IV NC1 spans 1457 to 1682; it reads GFLLVLHSQT…SRCQVCMKHS (226 aa). 6 disulfides stabilise this stretch: C1472–C1561, C1505–C1558, C1517–C1523, C1580–C1678, C1614–C1675, and C1626–C1633.

Belongs to the type IV collagen family. As to quaternary structure, there are six type IV collagen isoforms, alpha 1(IV)-alpha 6(IV), each of which can form a triple helix structure with 2 other chains to generate type IV collagen network. The alpha 3(IV) chain forms a triple helical protomer with alpha 4(IV) and alpha 5(IV); this triple helical structure dimerizes through NC1-NC1 domain interactions such that the alpha 3(IV), alpha 4(IV) and alpha 5(IV) chains of one protomer connect with the alpha 5(IV), alpha 4(IV) and alpha 3(IV) chains of the opposite protomer, respectively. Associates with LAMB2 at the neuromuscular junction and in GBM. In terms of processing, prolines at the third position of the tripeptide repeating unit (G-X-Y) are hydroxylated in some or all of the chains. Post-translationally, type IV collagens contain numerous cysteine residues which are involved in inter- and intramolecular disulfide bonding. 12 of these, located in the NC1 domain, are conserved in all known type IV collagens. The trimeric structure of the NC1 domains is stabilized by covalent bonds between Lys and Met residues. In terms of tissue distribution, expressed in Bruch's membrane, outer plexiform layer, inner nuclear layer, inner plexiform layer, ganglion cell layer, inner limiting membrane and around the blood vessels of the retina (at protein level). Highly expressed in kidney and lung. Detected at lower levels in heart, muscle and skin.

It localises to the secreted. The protein localises to the extracellular space. Its subcellular location is the extracellular matrix. The protein resides in the basement membrane. Functionally, type IV collagen is the major structural component of glomerular basement membranes (GBM), forming a 'chicken-wire' meshwork together with laminins, proteoglycans and entactin/nidogen. The sequence is that of Collagen alpha-4(IV) chain from Mus musculus (Mouse).